A 72-amino-acid chain; its full sequence is Probable neurotoxin pcD-996 (72 aa).

The N-terminal stretch at 1–19 is a signal peptide; it reads MNYLVMISFALLLVIGVES. In terms of domain architecture, LCN-type CS-alpha/beta spans 21–72; it reads RDGYFVEPDNCLVYCMPSPEICDRGCKRYGATSGFCKEFSKGENFCWCKGLR. Cystine bridges form between Cys-35–Cys-56, Cys-42–Cys-66, and Cys-46–Cys-68. Residue Arg-72 is a propeptide, removed by a carboxypeptidase.

Belongs to the long (3 C-C) scorpion toxin superfamily. Expressed by the venom gland.

It localises to the secreted. This is Probable neurotoxin pcD-996 from Androctonus australis (Sahara scorpion).